The primary structure comprises 195 residues: UPF0215 protein TK2033 (195 aa).

This sequence belongs to the UPF0215 family.

This chain is UPF0215 protein TK2033, found in Thermococcus kodakarensis (strain ATCC BAA-918 / JCM 12380 / KOD1) (Pyrococcus kodakaraensis (strain KOD1)).